Reading from the N-terminus, the 609-residue chain is UvrABC system protein C (609 aa).

Residues 22-100 (EKPGVYQYLN…IKKYKPRYNV (79 aa)) enclose the GIY-YIG domain. Residues 214–249 (QDISRMLVEKMQELANEMKFEEAQKIKEKYLLIENY) enclose the UVR domain.

It belongs to the UvrC family. As to quaternary structure, interacts with UvrB in an incision complex.

The protein localises to the cytoplasm. Functionally, the UvrABC repair system catalyzes the recognition and processing of DNA lesions. UvrC both incises the 5' and 3' sides of the lesion. The N-terminal half is responsible for the 3' incision and the C-terminal half is responsible for the 5' incision. In Bacteroides thetaiotaomicron (strain ATCC 29148 / DSM 2079 / JCM 5827 / CCUG 10774 / NCTC 10582 / VPI-5482 / E50), this protein is UvrABC system protein C.